A 604-amino-acid chain; its full sequence is uncharacterized protein (604 aa).

Positions 45-329 (LPLSFLTVLI…LGQVYNQLLM (285 aa)) constitute an ABC transmembrane type-1 domain. The next 6 helical transmembrane spans lie at 49–69 (FLTV…IGVY), 82–102 (LLIQ…AANV), 162–182 (VINL…LFTL), 184–204 (PELT…STSL), 273–293 (LVEM…ATLI), and 297–317 (TITI…WEPI). The ABC transporter domain maps to 363 to 597 (ISFEEVEFSY…GGIYAGLVKA (235 aa)). 396 to 403 (GHTGSGKT) provides a ligand contact to ATP.

This sequence belongs to the ABC transporter superfamily.

Its subcellular location is the cell membrane. This is an uncharacterized protein from Bacillus subtilis (strain 168).